Here is a 551-residue protein sequence, read N- to C-terminus: Membrane protein insertase YidC (551 aa).

A helical transmembrane segment spans residues Tyr-6–Asp-26. The segment covering Ser-34 to Ser-50 has biased composition (low complexity). Positions Ser-34–Pro-68 are disordered. The span at Ala-56–Pro-68 shows a compositional bias: polar residues. Helical transmembrane passes span Thr-340–Ile-360, Phe-363–Phe-383, Leu-433–Leu-453, Phe-464–Met-484, and Ile-509–Trp-529.

Belongs to the OXA1/ALB3/YidC family. Type 1 subfamily. As to quaternary structure, interacts with the Sec translocase complex via SecD. Specifically interacts with transmembrane segments of nascent integral membrane proteins during membrane integration.

It localises to the cell inner membrane. Required for the insertion and/or proper folding and/or complex formation of integral membrane proteins into the membrane. Involved in integration of membrane proteins that insert both dependently and independently of the Sec translocase complex, as well as at least some lipoproteins. Aids folding of multispanning membrane proteins. This chain is Membrane protein insertase YidC, found in Marinomonas sp. (strain MWYL1).